We begin with the raw amino-acid sequence, 644 residues long: ATP-dependent zinc metalloprotease FtsH (644 aa).

Residues 1–4 (MAKN) are Cytoplasmic-facing. A helical transmembrane segment spans residues 5-25 (LILWLVIAVVLMSVFQSFGPS). Residues 26–98 (ESNGRKVDYS…VGEPPEEPSL (73 aa)) lie on the Periplasmic side of the membrane. The chain crosses the membrane as a helical span at residues 99–119 (LASIFISWFPMLLLIGVWIFF). The Cytoplasmic segment spans residues 120–644 (MRQMQGGGGK…NTMSEQLGDK (525 aa)). 192 to 199 (GPPGTGKT) contributes to the ATP binding site. H414 is a binding site for Zn(2+). Residue E415 is part of the active site. H418 and D492 together coordinate Zn(2+). The disordered stretch occupies residues 599-644 (RPPAGWEDPNGTNNSDSNGTPQAPRPVDEPRTPNPGNTMSEQLGDK). Polar residues-rich tracts occupy residues 608-619 (NGTNNSDSNGTP) and 632-644 (NPGN…LGDK).

This sequence in the central section; belongs to the AAA ATPase family. The protein in the C-terminal section; belongs to the peptidase M41 family. As to quaternary structure, homohexamer. Zn(2+) serves as cofactor.

The protein localises to the cell inner membrane. In terms of biological role, acts as a processive, ATP-dependent zinc metallopeptidase for both cytoplasmic and membrane proteins. Plays a role in the quality control of integral membrane proteins. This Salmonella typhi protein is ATP-dependent zinc metalloprotease FtsH.